Consider the following 31-residue polypeptide: Phalloidin proprotein (31 aa).

Residues Met-1 to Pro-10 constitute a propeptide that is removed on maturation. The cyclopeptide (Ala-Pro) cross-link spans Ala-11 to Pro-17. A cross-link (2'-cysteinyl-6'-hydroxytryptophan sulfoxide (Trp-Cys)) is located at residues Trp-12 to Cys-16. A propeptide spanning residues Cys-18–Glu-31 is cleaved from the precursor.

It belongs to the MSDIN fungal toxin family. Processed by the macrocyclase-peptidase enzyme POPB to yield a toxic cyclic heptapeptide. POPB first removes 10 residues from the N-terminus. Conformational trapping of the remaining peptide forces the enzyme to release this intermediate rather than proceed to macrocyclization. The enzyme rebinds the remaining peptide in a different conformation and catalyzes macrocyclization of the N-terminal 7 residues.

Major toxin that belongs to the bicyclic heptapeptides called phallotoxins. Although structurally related to amatoxins, phallotoxins have a different mode of action, which is the stabilization of F-actin. Phallotoxins are poisonous when administered parenterally, but not orally because of poor absorption. The protein is Phalloidin proprotein of Amanita ocreata (Western North American destroying angel).